The following is a 164-amino-acid chain: IGPSGVETTVYAGDGEYLMXLSIGTPAQPFSAIMDTGSDLIWTQXQPXTQXFXQSDPQGSSSFSTLPCGYGDSETQGSMGTETFTFGSVSIPNITFGXGEGPLPLPXQLDVAKYITLDLPIDPSAFDLCFQTPSDPSNLQIPTFVMHFDTGNSVVSFVSAQCGA.

The region spanning 17 to 164 is the Peptidase A1 domain; that stretch reads YLMXLSIGTP…VSFVSAQCGA (148 aa). The active site involves D35. The N-linked (GlcNAc...) asparagine glycan is linked to N93.

This sequence belongs to the peptidase A1 family. As to expression, parenchymal cells surrounding the secretory glands.

The protein resides in the secreted. It catalyses the reaction Similar to pepsin, but also cleaves on either side of Asp and at Lys-|-Arg.. With respect to regulation, inhibited by pepstatin and by diazoacetyl-D,L-norleucine methyl ester (DAN) in the presence of Cu(2+) ions. Functionally, extracellular proteinase found in the pitcher fluid of carnivorous plants. Digest prey for nitrogen uptake. The polypeptide is Aspartic proteinase nepenthesin-1 (Nepenthes distillatoria (Pitcher plant)).